The sequence spans 28 residues: Small integral membrane protein 47 (28 aa).

The chain crosses the membrane as a helical span at residues 7-24 (VTLAMALFTILTSIYFFN).

Its subcellular location is the membrane. The chain is Small integral membrane protein 47 from Homo sapiens (Human).